Consider the following 30-residue polypeptide: Sperm protamine P5 (30 aa).

The disordered stretch occupies residues 1 to 30 (YRRRRRRGRRGRRRRGRRRRSRGRRRAHGG).

As to expression, testis.

It is found in the nucleus. The protein localises to the chromosome. Protamines substitute for histones in the chromatin of sperm during the haploid phase of spermatogenesis. They compact sperm DNA into a highly condensed, stable and inactive complex. The polypeptide is Sperm protamine P5 (Octopus vulgaris (Common octopus)).